The sequence spans 142 residues: Baculoviral IAP repeat-containing protein 5 (142 aa).

Residues 18–88 (RISTFKNWPF…KHSSGCAFLS (71 aa)) form a BIR repeat. At S20 the chain carries Phosphoserine; by AURKC. An N6-acetyllysine modification is found at K23. Position 34 is a phosphothreonine; by CDK1 and CDK15 (T34). T48 carries the phosphothreonine modification. Positions 57, 60, 77, and 84 each coordinate Zn(2+). N6-acetyllysine occurs at positions 90, 110, 112, and 115. T117 carries the post-translational modification Phosphothreonine; by AURKB. N6-acetyllysine is present on K129.

The protein belongs to the IAP family. In terms of assembly, monomer or homodimer. Exists as a homodimer in the apo state and as a monomer in the CPC-bound state. The monomer protects cells against apoptosis more efficiently than the dimer. Only the dimeric form is capable of enhancing tubulin stability in cells. When phosphorylated, interacts with LAMTOR5/HBXIP; the resulting complex binds pro-CASP9, as well as active CASP9, but much less efficiently. Component of the chromosomal passenger complex (CPC) composed of at least BIRC5/survivin, CDCA8/borealin, INCENP, AURKB or AURKC; in the complex forms a triple-helix bundle-based subcomplex with INCENP and CDCA8. Interacts with JTB. Interacts (via BIR domain) with histone H3 phosphorylated at 'Thr-3' (H3pT3). Interacts with EVI5. Interacts with GTP-bound RAN in both the S and M phases of the cell cycle. Interacts with USP9X. Interacts with tubulin. Interacts with BIRC2/c-IAP1. The acetylated form at Lys-129 interacts with STAT3. The monomeric form deacetylated at Lys-129 interacts with XPO1/CRM1. The monomeric form interacts with XIAP/BIRC4. Both the dimeric and monomeric form can interact with DIABLO/SMAC. Interacts with BIRC6/bruce. Interacts with FBXL7; this interaction facilitates the polyubiquitination and subsequent proteasomal degradation of BIRC5 by the SCF(FBXL7) E3 ubiquitin-protein ligase complex. Post-translationally, ubiquitinated by the Cul9-RING ubiquitin-protein ligase complex, leading to its degradation. Ubiquitination is required for centrosomal targeting. Deubiquitinated by USP35 or USP38; leading to stabilization. In terms of processing, acetylation at Lys-129 results in its homodimerization, while deacetylation promotes the formation of monomers which heterodimerize with XPO1/CRM1 which facilitates its nuclear export. The acetylated form represses STAT3 transactivation. The dynamic equilibrium between its acetylation and deacetylation at Lys-129 determines its interaction with XPO1/CRM1, its subsequent subcellular localization, and its ability to inhibit STAT3 transactivation. In vitro phosphorylation at Thr-117 by AURKB prevents interaction with INCENP and localization to mitotic chromosomes. Phosphorylation at Thr-48 by CK2 is critical for its mitotic and anti-apoptotic activities. Phosphorylation at Thr-34 by CDK15 is critical for its anti-apoptotic activity. Phosphorylation at Ser-20 by AURKC is critical for regulation of proper chromosome alignment and segregation, and possibly cytokinesis.

It is found in the cytoplasm. The protein resides in the nucleus. The protein localises to the chromosome. It localises to the centromere. Its subcellular location is the cytoskeleton. It is found in the spindle. The protein resides in the kinetochore. The protein localises to the midbody. Multitasking protein that has dual roles in promoting cell proliferation and preventing apoptosis. Component of a chromosome passage protein complex (CPC) which is essential for chromosome alignment and segregation during mitosis and cytokinesis. Acts as an important regulator of the localization of this complex; directs CPC movement to different locations from the inner centromere during prometaphase to midbody during cytokinesis and participates in the organization of the center spindle by associating with polymerized microtubules. Involved in the recruitment of CPC to centromeres during early mitosis via association with histone H3 phosphorylated at 'Thr-3' (H3pT3) during mitosis. The complex with RAN plays a role in mitotic spindle formation by serving as a physical scaffold to help deliver the RAN effector molecule TPX2 to microtubules. May counteract a default induction of apoptosis in G2/M phase. The acetylated form represses STAT3 transactivation of target gene promoters. May play a role in neoplasia. Inhibitor of CASP3 and CASP7. Essential for the maintenance of mitochondrial integrity and function. In Pongo abelii (Sumatran orangutan), this protein is Baculoviral IAP repeat-containing protein 5 (BIRC5).